The following is a 424-amino-acid chain: UPF0229 protein Ping_2705 (424 aa).

Residues 77–108 (PGNQDFIGGDRIERPPSGGAGGSGSGASDSGK) are disordered.

This sequence belongs to the UPF0229 family.

In Psychromonas ingrahamii (strain DSM 17664 / CCUG 51855 / 37), this protein is UPF0229 protein Ping_2705.